The following is a 249-amino-acid chain: uncharacterized protein (249 aa).

A divalent metal cation-binding residues include His-10, His-12, Glu-95, His-129, His-150, and Asp-198.

The protein belongs to the metallo-dependent hydrolases superfamily. TatD-type hydrolase family. It depends on a divalent metal cation as a cofactor.

This is an uncharacterized protein from Methanocaldococcus jannaschii (strain ATCC 43067 / DSM 2661 / JAL-1 / JCM 10045 / NBRC 100440) (Methanococcus jannaschii).